The following is a 162-amino-acid chain: Nucleotide-binding protein ACIAD3137 (162 aa).

Belongs to the YajQ family.

Its function is as follows. Nucleotide-binding protein. This Acinetobacter baylyi (strain ATCC 33305 / BD413 / ADP1) protein is Nucleotide-binding protein ACIAD3137.